A 325-amino-acid polypeptide reads, in one-letter code: Eukaryotic translation initiation factor 3 subunit I (325 aa).

4 WD repeats span residues 8–47 (GHERSITQIKYNREGDLLFTVAKDPIVNVWYSVNGERLGT), 50–91 (GHTG…ALLK), 144–183 (CNDSKITSAVWGPLGECIIAGHEGGELNQYSAKSGEVLVN), and 186–225 (EHSRQINDIQLSRDMTMFVTASKDNTAKLFDSTTLEHQKT). Threonine 219 is modified (phosphothreonine). The residue at position 264 (lysine 264) is an N6-acetyllysine. A Glycyl lysine isopeptide (Lys-Gly) (interchain with G-Cter in ubiquitin) cross-link involves residue lysine 282. One copy of the WD 5 repeat lies at 283-324 (GHFGPINSVAFHPDGKSYSSGGEDGYVRIHYFDPQYFEFEFE). Position 308 is a phosphotyrosine (tyrosine 308).

This sequence belongs to the eIF-3 subunit I family. As to quaternary structure, component of the eukaryotic translation initiation factor 3 (eIF-3) complex, which is composed of 13 subunits: EIF3A, EIF3B, EIF3C, EIF3D, EIF3E, EIF3F, EIF3G, EIF3H, EIF3I, EIF3J, EIF3K, EIF3L and EIF3M. The eIF-3 complex appears to include 3 stable modules: module A is composed of EIF3A, EIF3B, EIF3G and EIF3I; module B is composed of EIF3F, EIF3H, and EIF3M; and module C is composed of EIF3C, EIF3D, EIF3E, EIF3K and EIF3L. EIF3C of module C binds EIF3B of module A and EIF3H of module B, thereby linking the three modules. EIF3J is a labile subunit that binds to the eIF-3 complex via EIF3B. The eIF-3 complex interacts with RPS6KB1 under conditions of nutrient depletion. Mitogenic stimulation leads to binding and activation of a complex composed of MTOR and RPTOR, leading to phosphorylation and release of RPS6KB1 and binding of EIF4B to eIF-3. Post-translationally, phosphorylated by TGF-beta type II receptor.

Its subcellular location is the cytoplasm. In terms of biological role, component of the eukaryotic translation initiation factor 3 (eIF-3) complex, which is required for several steps in the initiation of protein synthesis. The eIF-3 complex associates with the 40S ribosome and facilitates the recruitment of eIF-1, eIF-1A, eIF-2:GTP:methionyl-tRNAi and eIF-5 to form the 43S pre-initiation complex (43S PIC). The eIF-3 complex stimulates mRNA recruitment to the 43S PIC and scanning of the mRNA for AUG recognition. The eIF-3 complex is also required for disassembly and recycling of post-termination ribosomal complexes and subsequently prevents premature joining of the 40S and 60S ribosomal subunits prior to initiation. The eIF-3 complex specifically targets and initiates translation of a subset of mRNAs involved in cell proliferation, including cell cycling, differentiation and apoptosis, and uses different modes of RNA stem-loop binding to exert either translational activation or repression. The sequence is that of Eukaryotic translation initiation factor 3 subunit I from Bos taurus (Bovine).